The chain runs to 119 residues: uncharacterized protein (119 aa).

This is an uncharacterized protein from Orgyia pseudotsugata (Douglas-fir tussock moth).